Reading from the N-terminus, the 427-residue chain is Serine hydroxymethyltransferase (427 aa).

120–122 (GHI) is a (6S)-5,6,7,8-tetrahydrofolate binding site. Lys-226 carries the post-translational modification N6-(pyridoxal phosphate)lysine.

This sequence belongs to the SHMT family. In terms of assembly, homodimer. It depends on pyridoxal 5'-phosphate as a cofactor.

It localises to the cytoplasm. It participates in amino-acid biosynthesis; glycine biosynthesis; glycine from L-serine: step 1/1. In terms of biological role, catalyzes the reversible interconversion of serine and glycine with a modified folate serving as the one-carbon carrier. Also exhibits a pteridine-independent aldolase activity toward beta-hydroxyamino acids, producing glycine and aldehydes, via a retro-aldol mechanism. This chain is Serine hydroxymethyltransferase, found in Pyrococcus furiosus (strain ATCC 43587 / DSM 3638 / JCM 8422 / Vc1).